The sequence spans 342 residues: Aldo-keto reductase pigE (342 aa).

An N-terminal signal peptide occupies residues 1–27; sequence MGSISPKTRFPIVLGAGLIGSPGLFEG. Position 52 (aspartate 52) interacts with NADP(+). The Proton donor role is filled by tyrosine 57. NADP(+)-binding residues include glutamine 182 and arginine 236. N-linked (GlcNAc...) asparagine glycosylation is present at asparagine 271.

The protein belongs to the aldo/keto reductase family. Aldo/keto reductase 2 subfamily.

The protein operates within secondary metabolite biosynthesis. Functionally, aldo-keto reductase; part of the gene cluster that mediates the biosynthesis of azaphilone pigments (MonAzPs), a complex mixture of compounds with a common azaphilone skeleton very widely used as food colorants. Within the pathway, pigE is involved in the dehydration of the C-11 alcohol followed by the reduction of the C6(7) double bond which increases the electrophilicity of the C-5 ketone of the resulting acyl benzopyran and allows the intramolecular Knoevenagel aldol condensation with the C-20 enol of the side chain to yield the characteristic linear tricyclic carbon skeletons of the yellow pigments. The first step of the pathway is performed by the nrPKS pigA that forms the hexaketide precursor from successive condensations of five malonyl-CoA units, with a simple acetyl-CoA starter unit. The role of esterase pigG is not clear, but it may play at most a supplementary role in the formation of the benzaldehyde produced by the pigA nrPKS. This very reactive benzaldehyde is intercepted by the pigC ketoreductase that to provide the first stable enzyme-free MonAzPs intermediate, 6-(4-hydroxy-2-oxopentyl)-3-methyl-2,4-dioxocyclohexane carbaldehyde, also known as M7PKS-1. The FAD-dependent monooxygenase pigN hydroxylates M7PKS-1 at C-4, which triggers the formation of the pyran ring. PigJ, pigK and pigD are involved in the acetylation of the pyran ring. PigJ and pigK form the two subunits of a dedicated fungal FAS that produces the side chain fatty acyl moiety of MonAzPs and pigD transfers the fatty acyl chain to the C-4 alcohol. PigM and pigO are involved in the elimination of the omega-1 alcohol. PigM acts as an O-acetyltransferase that synthesizes the putative O-11 acetyl intermediate whereas pigO eliminates acetic acid to yield an intermediate with a C10(11) double bond. The dehydration of the C-11 alcohol followed by the reduction of the C6(7) double bond by the NAD(P)H-dependent oxidoreductase pigE increases the electrophilicity of the C-5 ketone of the resulting acyl benzopyran. This in turn sets up the C-5 ketone for an intramolecular Knoevenagel aldol condensation with the C-20 enol of the side chain. This condensation affords the characteristic linear tricyclic carbon skeletons of the yellow pigments that serve as the common precursors for the classical yellow pigments monascin and ankaflavin, orange pigments rubopunctatin and monascorubrin, and red pigments ribropunctamine and monascorubramine. The FAD-dependent oxidoreductase pigF is especially invoved in the biosynthesis of orange and red pigments via desaturation of C6(7). This chain is Aldo-keto reductase pigE, found in Monascus ruber (Mold).